A 467-amino-acid polypeptide reads, in one-letter code: F-box/kelch-repeat protein SKIP11 (467 aa).

A disordered region spans residues 77–117; that stretch reads LSGGEEQADAAIGDGSSSRQEQEQQSDFNDNGGDSSDSHSL. The span at 92-111 shows a compositional bias: low complexity; sequence SSSRQEQEQQSDFNDNGGDS. An F-box domain is found at 116 to 163; the sequence is SLINEIGRDNSIDCLIRCSRSDYGSIASLNRNFRSLVKSGEIYRLRRQ. Kelch repeat units lie at residues 159–210, 215–259, 261–307, 308–356, and 365–411; these read RLRR…KESL, DLLV…SLGE, AIFA…FMDG, KFYV…DMSP, and AVVN…GLAF.

As to quaternary structure, part of a SCF (ASK-cullin-F-box) protein ligase complex. Interacts with SKP1A/ASK1 and SPK1B/ASK2.

Its subcellular location is the nucleus. Its pathway is protein modification; protein ubiquitination. In terms of biological role, component of SCF(ASK-cullin-F-box) E3 ubiquitin ligase complexes, which may mediate the ubiquitination and subsequent proteasomal degradation of target proteins. This is F-box/kelch-repeat protein SKIP11 (SKIP11) from Arabidopsis thaliana (Mouse-ear cress).